The following is a 122-amino-acid chain: MIQQETYLNVADNSGAKKLLCIRVLGGSNRRYGSVGDVIIATVKDATPNMAVKKSDVVRAVIVRTRKSIRRESGMSIRFDDNAAVLINQDGNPRGTRVFGPVARELRDKNFTKIVSLAPEVL.

It belongs to the universal ribosomal protein uL14 family. Part of the 50S ribosomal subunit. Forms a cluster with proteins L3 and L19. In the 70S ribosome, L14 and L19 interact and together make contacts with the 16S rRNA in bridges B5 and B8.

Its function is as follows. Binds to 23S rRNA. Forms part of two intersubunit bridges in the 70S ribosome. The protein is Large ribosomal subunit protein uL14 of Thermosynechococcus vestitus (strain NIES-2133 / IAM M-273 / BP-1).